The chain runs to 292 residues: GTP cyclohydrolase FolE2 (292 aa).

The protein belongs to the GTP cyclohydrolase IV family.

The catalysed reaction is GTP + H2O = 7,8-dihydroneopterin 3'-triphosphate + formate + H(+). It participates in cofactor biosynthesis; 7,8-dihydroneopterin triphosphate biosynthesis; 7,8-dihydroneopterin triphosphate from GTP: step 1/1. Its function is as follows. Converts GTP to 7,8-dihydroneopterin triphosphate. The chain is GTP cyclohydrolase FolE2 from Staphylococcus epidermidis (strain ATCC 35984 / DSM 28319 / BCRC 17069 / CCUG 31568 / BM 3577 / RP62A).